A 181-amino-acid chain; its full sequence is Transcriptional repressor NrdR (181 aa).

Residues 3-34 fold into a zinc finger; it reads CLFCQHTYTRVIDSRVSEDGATIRRRRECEAC. The ATP-cone domain occupies 49-139; sequence PVIIKKDGGR…VYRSFQDVAD (91 aa).

It belongs to the NrdR family. Requires Zn(2+) as cofactor.

Negatively regulates transcription of bacterial ribonucleotide reductase nrd genes and operons by binding to NrdR-boxes. This Xylella fastidiosa (strain 9a5c) protein is Transcriptional repressor NrdR.